A 953-amino-acid chain; its full sequence is Zinc finger protein 618 (953 aa).

An N-acetylmethionine modification is found at M1. The tract at residues 1–56 is disordered; sequence MSQPDGAAAPQVDGASAPGRKSAVNRERLKRSQKSSKVEGPEPVPAEASLSAEQGT. Glycyl lysine isopeptide (Lys-Gly) (interchain with G-Cter in SUMO2) cross-links involve residues K63 and K81. C2H2-type zinc fingers lie at residues 146–168 and 187–209; these read YECGICGKKYKYYNCFQTHVRAH and YTCDICGKKYKYYSCFQEHRDLH. Residue K238 forms a Glycyl lysine isopeptide (Lys-Gly) (interchain with G-Cter in SUMO2) linkage. A C2H2-type 3 zinc finger spans residues 255 to 277; it reads YTCEFCGKQYKYYTPYQEHVALH. Disordered stretches follow at residues 283 to 305 and 337 to 390; these read APGWEPPEDPDTGSECSHPEVTP and TPPA…SSEP. Positions 339–354 are enriched in polar residues; it reads PATQTQTFRAPNSGSP. Over residues 365-379 the composition is skewed to basic and acidic residues; it reads FSRRVESKAQNHFEE. Residues 391 to 413 form a C2H2-type 4 zinc finger; that stretch reads YTCGACGIQFQFYSNLLEHMQSH. The segment covering 419 to 428 has biased composition (polar residues); that stretch reads NNITSNQSRS. The interval 419–461 is disordered; it reads NNITSNQSRSPPAAVEEKWKPQAQRNSANNTTTSGLTPNSVIP. K436 is covalently cross-linked (Glycyl lysine isopeptide (Lys-Gly) (interchain with G-Cter in SUMO2)). The segment covering 441-458 has biased composition (polar residues); sequence AQRNSANNTTTSGLTPNS.

It belongs to the krueppel C2H2-type zinc-finger protein family. In terms of assembly, interacts with UHRF2.

Its subcellular location is the nucleus. The protein localises to the chromosome. Regulates UHRF2 function as a specific 5-hydroxymethylcytosine (5hmC) reader by regulating its chromatin localization. This Mus musculus (Mouse) protein is Zinc finger protein 618 (Znf618).